Reading from the N-terminus, the 628-residue chain is Glutamyl-tRNA(Gln) amidotransferase subunit E (628 aa).

Belongs to the GatB/GatE family. GatE subfamily. In terms of assembly, heterodimer of GatD and GatE.

It carries out the reaction L-glutamyl-tRNA(Gln) + L-glutamine + ATP + H2O = L-glutaminyl-tRNA(Gln) + L-glutamate + ADP + phosphate + H(+). Its function is as follows. Allows the formation of correctly charged Gln-tRNA(Gln) through the transamidation of misacylated Glu-tRNA(Gln) in organisms which lack glutaminyl-tRNA synthetase. The reaction takes place in the presence of glutamine and ATP through an activated gamma-phospho-Glu-tRNA(Gln). The GatDE system is specific for glutamate and does not act on aspartate. The protein is Glutamyl-tRNA(Gln) amidotransferase subunit E of Pyrococcus furiosus (strain ATCC 43587 / DSM 3638 / JCM 8422 / Vc1).